The primary structure comprises 694 residues: Elongation factor G (694 aa).

Residues 8-285 (EKVRNIGIAA…AVVELLPSPQ (278 aa)) enclose the tr-type G domain. GTP is bound by residues 17 to 24 (AHIDAGKT), 81 to 85 (DTPGH), and 135 to 138 (NKMD).

It belongs to the TRAFAC class translation factor GTPase superfamily. Classic translation factor GTPase family. EF-G/EF-2 subfamily.

It localises to the cytoplasm. Its function is as follows. Catalyzes the GTP-dependent ribosomal translocation step during translation elongation. During this step, the ribosome changes from the pre-translocational (PRE) to the post-translocational (POST) state as the newly formed A-site-bound peptidyl-tRNA and P-site-bound deacylated tRNA move to the P and E sites, respectively. Catalyzes the coordinated movement of the two tRNA molecules, the mRNA and conformational changes in the ribosome. The chain is Elongation factor G (fusA) from Synechococcus sp. (strain ATCC 27144 / PCC 6301 / SAUG 1402/1) (Anacystis nidulans).